The primary structure comprises 137 residues: Ribonuclease P protein component (137 aa).

This sequence belongs to the RnpA family. Consists of a catalytic RNA component (M1 or rnpB) and a protein subunit.

It catalyses the reaction Endonucleolytic cleavage of RNA, removing 5'-extranucleotides from tRNA precursor.. Its function is as follows. RNaseP catalyzes the removal of the 5'-leader sequence from pre-tRNA to produce the mature 5'-terminus. It can also cleave other RNA substrates such as 4.5S RNA. The protein component plays an auxiliary but essential role in vivo by binding to the 5'-leader sequence and broadening the substrate specificity of the ribozyme. This Porphyromonas gingivalis (strain ATCC BAA-308 / W83) protein is Ribonuclease P protein component.